Reading from the N-terminus, the 315-residue chain is Cysteine proteinase 2 (315 aa).

Positions 1-13 (MFAFICLLAIASA) are cleaved as a signal peptide. The propeptide at 14–93 (IDFNTWASKN…NGQVKYLNIQ (80 aa)) is activation peptide. 2 disulfides stabilise this stretch: Cys-115-Cys-161 and Cys-152-Cys-193. Residue Cys-118 is part of the active site. Catalysis depends on residues His-259 and Asn-279.

Belongs to the peptidase C1 family. In terms of assembly, interacts with cysteine protease inhibitor ICP1. Interacts with cysteine protease inhibitor ICP2.

The protein localises to the cell membrane. Its subcellular location is the cytoplasmic vesicle. The protein resides in the phagosome. It is found in the secreted. The enzyme catalyses Hydrolysis of proteins, including basement membrane collagen and azocasein. Preferential cleavage: Arg-Arg-|-Xaa in small molecule substrates including Z-Arg-Arg-|-NHMec.. Inhibited by cysteine protease inhibitors ICP1 and ICP2. Inhibited by leupeptin and such inhibitors of cysteine proteinases as L-transepoxysuccinyl-L-leucylamido-(4-guanidino)butane, peptidyldiazomethanes, iodoacetic acid and chicken cystatin. Cysteine protease which degrades matrix proteins such as collagen, laminin and fibronectin and thus is involved in the destruction of human tissue. Can abolish adhesion. May play an important role in pathogenicity. The sequence is that of Cysteine proteinase 2 from Entamoeba histolytica (strain ATCC 30459 / HM-1:IMSS / ABRM).